The primary structure comprises 186 residues: Apolipophorin-3 (186 aa).

Residues 1 to 18 (MAAKYVFVVAACSALAQA) form the signal peptide. Positions 19 to 23 (GIVRR) are excised as a propeptide.

It belongs to the insect apolipophorin-3 family. As to quaternary structure, equilibrium between a soluble monomer and a bound lipoprotein form. Apolipophorin-3 associates with lipophorin during lipid loading until each particle contains 9 or 14 molecules of apolipophorin-3. Expressed in hemolymph. Also found in hemocytes and fat body.

The protein localises to the secreted. Assists in the loading of diacylglycerol, generated from triacylglycerol stores in the fat body through the action of adipokinetic hormone, into lipophorin, the hemolymph lipoprotein. It increases the lipid carrying capacity of lipophorin by covering the expanding hydrophobic surface resulting from diacylglycerol uptake. It thus plays a critical role in the transport of lipids during flight in several species of insects. Has antibacterial activity against the Gram-positive bacteria L.monocytogenes (MIC=6.5 uM). Lacks antibacterial activity against the Gram-positive bacteria B.circulans, M.luteus, S.aureus, and S.lutea, and the Gram-negative bacteria E.coli D31, E.coli ATCC 25922, and S.typhimurium. Lacks antifungal activity against S.cerevisiae, P.pastoris, Z.marxianus, C.albicans, C.wickerhamii, A.niger, F.oxysporum, and T.harizianum. The polypeptide is Apolipophorin-3 (Galleria mellonella (Greater wax moth)).